Reading from the N-terminus, the 1481-residue chain is Cystic fibrosis transmembrane conductance regulator (1481 aa).

Residues 1–77 (MQRSPLEKAS…KLINALRRCF (77 aa)) lie on the Cytoplasmic side of the membrane. Residues 78-98 (FWRFMFYGILLYLGEVTKAVQ) form a helical membrane-spanning segment. Residues 81-365 (FMFYGILLYL…WAVQTWYDSL (285 aa)) enclose the ABC transmembrane type-1 1 domain. The Extracellular portion of the chain corresponds to 99–122 (PLLLGRIIASYDPDNKEERSIAIY). Residues 123–146 (LGIGLCLLFIVRTLLLHPAIFGLH) form a helical membrane-spanning segment. Residues 147–195 (HIGMQMRIAMFSLIYKKTLKLSSRVLDKISIGQLVSLLSNNLNKFDEGL) are Cytoplasmic-facing. A helical membrane pass occupies residues 196–216 (ALAHFVWIVPLQVALLMGLIW). Residues 217 to 222 (ELLQAS) lie on the Extracellular side of the membrane. The chain crosses the membrane as a helical span at residues 223–243 (AFCGLGFLIVLALFQAGLGRM). Residues 244 to 298 (MMKYRDQRAGKINERLVITSEMIENIQSVKAYCWEEAMEKMIENLRQTELKLTRK) are Cytoplasmic-facing. A helical transmembrane segment spans residues 299 to 319 (AAYVRYFNSSAFFFSGFFVVF). The Extracellular segment spans residues 320 to 339 (LSVLPYALIKGIVLRKIFTT). The helical transmembrane segment at 340 to 358 (ISFCIVLRMAVTRQFPWAV) threads the bilayer. Residues 359-858 (QTWYDSLGAI…YLRYITVHKS (500 aa)) are Cytoplasmic-facing. ATP contacts are provided by residues tryptophan 401, serine 434, 458 to 465 (GSTGAGKT), and glutamine 493. Residues 423–646 (NDDDSLFFSN…RPDFSSKLMG (224 aa)) enclose the ABC transporter 1 domain. A lipid anchor (S-palmitoyl cysteine) is attached at cysteine 524. A phosphoserine mark is found at serine 549 and serine 660. A disordered R region region spans residues 654-831 (SAERRNSILT…EEINEEDLKE (178 aa)). A Phosphoserine; by PKA modification is found at serine 670. Serine 686 is modified (phosphoserine). Lysine 688 participates in a covalent cross-link: Glycyl lysine isopeptide (Lys-Gly) (interchain with G-Cter in ubiquitin). Phosphoserine is present on residues serine 700 and serine 712. The residue at position 717 (threonine 717) is a Phosphothreonine. A phosphoserine mark is found at serine 737, serine 753, serine 768, serine 790, serine 795, and serine 813. A helical membrane pass occupies residues 859–879 (LIFVLIWCLVIFLAEVAASLV). Residues 859–1155 (LIFVLIWCLV…AVNSSIDVDS (297 aa)) enclose the ABC transmembrane type-1 2 domain. Topologically, residues 880 to 918 (VLWFLGNTPPQDKGNSTYSRNNSYAVIITRTSSYYVFYI) are extracellular. N-linked (GlcNAc...) asparagine glycans are attached at residues asparagine 894 and asparagine 900. The discontinuously helical transmembrane segment at 919-939 (YVGVADTLLAMGFFRGLPLVH) threads the bilayer. The Cytoplasmic segment spans residues 940–990 (TLITVSKILHHKMLHSVLQAPMSTLNTLKAGGILNRFSKDIAILDDLLPLT). Residues 991–1011 (IFDFIQLLLIVIGAIAVVAVL) traverse the membrane as a helical segment. The Extracellular portion of the chain corresponds to 1012 to 1013 (QP). A helical membrane pass occupies residues 1014-1034 (YIFVATVPVIVAFIMLRAYFL). At 1035–1095 (QTSQQLKQLE…TANWFLYLST (61 aa)) the chain is on the cytoplasmic side. Residues 1096 to 1116 (LRWFQMRIEMIFVIFFIAVTF) form a helical membrane-spanning segment. Residues 1117-1130 (ISILTTGEGEGTVG) are Extracellular-facing. A helical transmembrane segment spans residues 1131–1151 (IILTLAMNIMSTLQWAVNSSI). The Cytoplasmic segment spans residues 1152 to 1481 (DVDSLMRSVS…TEEEVQDTRL (330 aa)). In terms of domain architecture, ABC transporter 2 spans 1211–1444 (MTVKDLTAKY…RSLFRQAISP (234 aa)). Residues tyrosine 1220 and 1245–1252 (GRTGSGKS) contribute to the ATP site. An interaction with GORASP2 region spans residues 1387–1481 (RTLKQAFADC…TEEEVQDTRL (95 aa)). Cysteine 1396 carries the S-palmitoyl cysteine lipid modification. Serine 1445 and serine 1457 each carry phosphoserine. Positions 1479-1481 (TRL) match the PDZ-binding motif.

This sequence belongs to the ABC transporter superfamily. ABCC family. CFTR transporter (TC 3.A.1.202) subfamily. In terms of assembly, monomer; does not require oligomerization for channel activity. May form oligomers in the membrane. Interacts with SLC26A3, SLC26A6 and NHERF1. Interacts with SHANK2. Interacts with MYO6. Interacts (via C-terminus) with GOPC (via PDZ domain); this promotes CFTR internalization and thereby decreases channel activity. Interacts with SLC4A7 through NHERF1. Found in a complex with MYO5B and RAB11A. Interacts with ANO1. Interacts with SLC26A8. Interacts with AHCYL1; the interaction increases CFTR activity. Interacts with CSE1L. The core-glycosylated form interacts with GORASP2 (via PDZ GRASP-type 1 domain) in respone to ER stress. Interacts with MARCHF2; the interaction leads to CFTR ubiqtuitination and degradation. Interacts with ADGRG2. N-glycosylated. Post-translationally, phosphorylated; cAMP treatment promotes phosphorylation and activates the channel. Dephosphorylation decreases the ATPase activity (in vitro). Phosphorylation at PKA sites activates the channel. Phosphorylation at PKC sites enhances the response to phosphorylation by PKA. Phosphorylated by AMPK; this inhibits channel activity. In terms of processing, ubiquitinated, leading to its degradation in the lysosome. Deubiquitination by USP10 in early endosomes enhances its endocytic recycling to the cell membrane. Ubiquitinated by RNF185 during ER stress. Ubiquitinated by MARCHF2.

Its subcellular location is the apical cell membrane. It is found in the early endosome membrane. The protein localises to the cell membrane. It localises to the recycling endosome membrane. The protein resides in the endoplasmic reticulum membrane. Its subcellular location is the nucleus. The catalysed reaction is ATP + H2O + closed Cl(-) channel = ADP + phosphate + open Cl(-) channel.. The enzyme catalyses chloride(in) = chloride(out). It catalyses the reaction hydrogencarbonate(in) = hydrogencarbonate(out). It carries out the reaction ATP + H2O = ADP + phosphate + H(+). Functionally, epithelial ion channel that plays an important role in the regulation of epithelial ion and water transport and fluid homeostasis. Mediates the transport of chloride ions across the cell membrane. Possesses an intrinsic ATPase activity and utilizes ATP to gate its channel; the passive flow of anions through the channel is gated by cycles of ATP binding and hydrolysis by the ATP-binding domains. The ion channel is also permeable to HCO(3)(-); selectivity depends on the extracellular chloride concentration. Exerts its function also by modulating the activity of other ion channels and transporters. Contributes to the regulation of the pH and the ion content of the epithelial fluid layer. Modulates the activity of the epithelial sodium channel (ENaC) complex, in part by regulating the cell surface expression of the ENaC complex. May regulate bicarbonate secretion and salvage in epithelial cells by regulating the transporter SLC4A7. Can inhibit the chloride channel activity of ANO1. Plays a role in the chloride and bicarbonate homeostasis during sperm epididymal maturation and capacitation. The chain is Cystic fibrosis transmembrane conductance regulator from Macaca fascicularis (Crab-eating macaque).